A 305-amino-acid polypeptide reads, in one-letter code: MSTQYSILFKQEHAHEDAIWTAAWGRSEKDGSETIVTGSLDDLVKVWKWSDEKLELQWTLEGHQLGVVSVNISQNGAIAASSSLDAHIRLWDLETGKQIKSMDAGPVDAWTVAFSPDSKYIATGSHLGKVNIFGVESGKKEHSLDTRGKFILSIAYSPDGKYLASGAIDGIINIFDIATGKLLHTLEGHAMPIRSLTFSPDSQLLVTASDDGYIKIYDVQHANLAGTLSGHGSWVLSVAFSPDDTHFVSSSSDKSIKVWDTSSRSCVNTFFDHQDQVWSVKYNPTGSKIVSAGDDRAIHIYDCPM.

7 WD repeats span residues 14 to 57, 62 to 101, 104 to 143, 146 to 187, 188 to 227, 230 to 269, and 272 to 305; these read AHED…LELQ, GHQL…QIKS, AGPV…KEHS, TRGK…HTLE, GHAM…LAGT, GHGS…CVNT, and DHQD…DCPM.

Belongs to the SKI8 family. Component of the PAF1 complex. Component of the SKI complex.

The protein localises to the nucleus. Its subcellular location is the cytoplasm. In terms of biological role, component of the PAF1 complex (PAF1C) which has multiple functions during transcription by RNA polymerase II and is implicated in regulation of development and maintenance of embryonic stem cell pluripotency. PAF1C associates with RNA polymerase II through interaction with POLR2A CTD non-phosphorylated and 'Ser-2'- and 'Ser-5'-phosphorylated forms and is involved in transcriptional elongation, acting both independently and synergistically with TCEA1 and in cooperation with the DSIF complex and HTATSF1. Also acts as a component of the SKI complex, a multiprotein complex that assists the RNA-degrading exosome during the mRNA decay and quality-control pathways. The SKI complex catalyzes mRNA extraction from 80S ribosomal complexes in the 3'-5' direction and channels mRNA to the cytosolic exosome for degradation. The protein is Superkiller complex protein 8 (skic8) of Danio rerio (Zebrafish).